Consider the following 189-residue polypeptide: Transcription factor FapR (189 aa).

It belongs to the FapR family.

Functionally, transcriptional factor involved in regulation of membrane lipid biosynthesis by repressing genes involved in fatty acid and phospholipid metabolism. This is Transcription factor FapR from Listeria welshimeri serovar 6b (strain ATCC 35897 / DSM 20650 / CCUG 15529 / CIP 8149 / NCTC 11857 / SLCC 5334 / V8).